Here is a 354-residue protein sequence, read N- to C-terminus: tRNA-specific 2-thiouridylase MnmA (354 aa).

ATP is bound by residues 6-13 and leucine 33; that span reads LLSGGVDS. The Nucleophile role is filled by cysteine 100. Residues cysteine 100 and cysteine 195 are joined by a disulfide bond. Glycine 123 serves as a coordination point for ATP. Residues 145–147 are interaction with tRNA; sequence KDQ. Cysteine 195 acts as the Cysteine persulfide intermediate in catalysis.

This sequence belongs to the MnmA/TRMU family.

It localises to the cytoplasm. The catalysed reaction is S-sulfanyl-L-cysteinyl-[protein] + uridine(34) in tRNA + AH2 + ATP = 2-thiouridine(34) in tRNA + L-cysteinyl-[protein] + A + AMP + diphosphate + H(+). Functionally, catalyzes the 2-thiolation of uridine at the wobble position (U34) of tRNA, leading to the formation of s(2)U34. The chain is tRNA-specific 2-thiouridylase MnmA from Borrelia hermsii (strain HS1 / DAH).